The primary structure comprises 206 residues: Ribosomal RNA large subunit methyltransferase E (206 aa).

Positions 60, 62, 80, 96, and 121 each coordinate S-adenosyl-L-methionine. Residue Lys161 is the Proton acceptor of the active site.

The protein belongs to the class I-like SAM-binding methyltransferase superfamily. RNA methyltransferase RlmE family.

Its subcellular location is the cytoplasm. It catalyses the reaction uridine(2552) in 23S rRNA + S-adenosyl-L-methionine = 2'-O-methyluridine(2552) in 23S rRNA + S-adenosyl-L-homocysteine + H(+). Specifically methylates the uridine in position 2552 of 23S rRNA at the 2'-O position of the ribose in the fully assembled 50S ribosomal subunit. The protein is Ribosomal RNA large subunit methyltransferase E of Legionella pneumophila (strain Lens).